The chain runs to 177 residues: Nucleoside triphosphate/diphosphate phosphatase (177 aa).

Arg-23 serves as the catalytic Proton donor. Mg(2+)-binding residues include Asn-87, Asp-103, Asp-105, Asp-107, Asp-120, and Glu-123.

This sequence belongs to the Ntdp family. Mg(2+) is required as a cofactor.

It carries out the reaction a ribonucleoside 5'-triphosphate + H2O = a ribonucleoside 5'-diphosphate + phosphate + H(+). The catalysed reaction is a ribonucleoside 5'-diphosphate + H2O = a ribonucleoside 5'-phosphate + phosphate + H(+). Its function is as follows. Has nucleoside phosphatase activity towards nucleoside triphosphates and nucleoside diphosphates. The sequence is that of Nucleoside triphosphate/diphosphate phosphatase from Streptococcus agalactiae serotype Ia (strain ATCC 27591 / A909 / CDC SS700).